A 365-amino-acid polypeptide reads, in one-letter code: MLSRRRVFAVERLGGRDGAFEDLAQGCVVPGVTCTYRRIPDNTHECSLDFREGQNELRGLERQMPLLKLASQDSGMEMVVGDSSLATLSGLSQDSLNLEPMGSPELPPAQLDRLLARQKLEEVLERSREFPSLSAQRGPLQLLNKPVDGVPIFAGEQESTEADTELEAGLEEAKEVGNMESAACTCLPGQGLRYLEHLCLVLEQMVRLQQLYLQLQTQRPSRDPEEEVLAPALSSSHIPDNRVQEHREELSQTKDPEGAEAASLPEVGVLVTSPSRLPEALLEPTHILPPSQEPKDLSHWDKVKVLLNRLRWRSPRLPEPPVPPDGSGSRMEFRNLSDRTPCHSQRKTFIPALVVKKPRAKNLSV.

2 disordered regions span residues 218–262 (QRPS…AEAA) and 315–342 (PRLP…RTPC). Composition is skewed to basic and acidic residues over residues 239–257 (PDNR…KDPE) and 331–341 (MEFRNLSDRTP).

This is an uncharacterized protein from Mus musculus (Mouse).